A 428-amino-acid chain; its full sequence is Trigger factor (428 aa).

One can recognise a PPIase FKBP-type domain in the interval 163–248 (GDTVVIDFEG…VHEVKAKQLP (86 aa)).

Belongs to the FKBP-type PPIase family. Tig subfamily.

Its subcellular location is the cytoplasm. It catalyses the reaction [protein]-peptidylproline (omega=180) = [protein]-peptidylproline (omega=0). In terms of biological role, involved in protein export. Acts as a chaperone by maintaining the newly synthesized protein in an open conformation. Functions as a peptidyl-prolyl cis-trans isomerase. The polypeptide is Trigger factor (Geobacillus kaustophilus (strain HTA426)).